A 202-amino-acid polypeptide reads, in one-letter code: Imidazoleglycerol-phosphate dehydratase (202 aa).

Belongs to the imidazoleglycerol-phosphate dehydratase family.

It localises to the cytoplasm. The enzyme catalyses D-erythro-1-(imidazol-4-yl)glycerol 3-phosphate = 3-(imidazol-4-yl)-2-oxopropyl phosphate + H2O. The protein operates within amino-acid biosynthesis; L-histidine biosynthesis; L-histidine from 5-phospho-alpha-D-ribose 1-diphosphate: step 6/9. This Rhizobium leguminosarum bv. trifolii (strain WSM2304) protein is Imidazoleglycerol-phosphate dehydratase.